The chain runs to 240 residues: Ubiquinone biosynthesis O-methyltransferase (240 aa).

Positions 44, 64, 85, and 129 each coordinate S-adenosyl-L-methionine.

This sequence belongs to the methyltransferase superfamily. UbiG/COQ3 family.

The catalysed reaction is a 3-demethylubiquinol + S-adenosyl-L-methionine = a ubiquinol + S-adenosyl-L-homocysteine + H(+). It carries out the reaction a 3-(all-trans-polyprenyl)benzene-1,2-diol + S-adenosyl-L-methionine = a 2-methoxy-6-(all-trans-polyprenyl)phenol + S-adenosyl-L-homocysteine + H(+). It functions in the pathway cofactor biosynthesis; ubiquinone biosynthesis. Functionally, O-methyltransferase that catalyzes the 2 O-methylation steps in the ubiquinone biosynthetic pathway. The chain is Ubiquinone biosynthesis O-methyltransferase from Escherichia coli O6:K15:H31 (strain 536 / UPEC).